The chain runs to 422 residues: Cell division protein DivIB (422 aa).

2 stretches are compositionally biased toward basic and acidic residues: residues 1–23 (MVDW…KQEE) and 62–75 (EEAK…DQEQ). The disordered stretch occupies residues 1–77 (MVDWDKEAQR…DFAKDQEQKH (77 aa)). At 1 to 109 (MVDWDKEAQR…LQLKSVSWSR (109 aa)) the chain is on the cytoplasmic side. A helical transmembrane segment spans residues 110–130 (LILAAAFLFMIIFSAFWLSPL). The 72-residue stretch at 131–202 (NRIATIEVSG…RTVEVNVQEF (72 aa)) folds into the POTRA domain. Residues 131-422 (NRIATIEVSG…TVTQTRSSNS (292 aa)) are Extracellular-facing. The interval 329-422 (NPLNDPFASP…TVTQTRSSNS (94 aa)) is disordered. Residues 338 to 379 (PEEKASYQEKVDQAKEKSKEKQAKADKHSSESKLGDKPKPRG) are compositionally biased toward basic and acidic residues. Low complexity predominate over residues 389–422 (TSSQRQTSSQSSPRPGTNSSQQSSTVTQTRSSNS).

This sequence belongs to the FtsQ/DivIB family. DivIB subfamily.

It is found in the cell membrane. Functionally, cell division protein that may be involved in stabilizing or promoting the assembly of the division complex. The polypeptide is Cell division protein DivIB (Aerococcus urinae (strain CCUG 59500 / ACS-120-V-Col10a)).